A 297-amino-acid polypeptide reads, in one-letter code: uncharacterized protein (297 aa).

Glu-46 is an active-site residue.

The protein belongs to the PhzF family. In terms of assembly, homodimer and homotetramer.

This is an uncharacterized protein from Salmonella typhimurium (strain LT2 / SGSC1412 / ATCC 700720).